The primary structure comprises 229 residues: MIQAIVTDIEGTTTDIRFVHQVLFPYARERLTPFLRAHQQDDDIAALLVDLRREIAQPDADIETLITVLHGFMDEDRKSTVLKAIQGIIWRTGYLQADFRGHVYPEVAQQLADWHQQGLKLYVYSSGSVAAQKLLFGYSDAGDLCPLFSGYFDTHVGAKRDVSAYQKIANQLGIAPQALLFLSDIRQELDAAQLAGWHTCQLIRDLPDNDSAHPQVNRFDQIVLSLFTE.

It belongs to the HAD-like hydrolase superfamily. MasA/MtnC family. In terms of assembly, monomer. The cofactor is Mg(2+).

The enzyme catalyses 5-methylsulfanyl-2,3-dioxopentyl phosphate + H2O = 1,2-dihydroxy-5-(methylsulfanyl)pent-1-en-3-one + phosphate. It functions in the pathway amino-acid biosynthesis; L-methionine biosynthesis via salvage pathway; L-methionine from S-methyl-5-thio-alpha-D-ribose 1-phosphate: step 3/6. The protein operates within amino-acid biosynthesis; L-methionine biosynthesis via salvage pathway; L-methionine from S-methyl-5-thio-alpha-D-ribose 1-phosphate: step 4/6. Bifunctional enzyme that catalyzes the enolization of 2,3-diketo-5-methylthiopentyl-1-phosphate (DK-MTP-1-P) into the intermediate 2-hydroxy-3-keto-5-methylthiopentenyl-1-phosphate (HK-MTPenyl-1-P), which is then dephosphorylated to form the acireductone 1,2-dihydroxy-3-keto-5-methylthiopentene (DHK-MTPene). The protein is Enolase-phosphatase E1 of Yersinia pestis (strain Pestoides F).